We begin with the raw amino-acid sequence, 439 residues long: Arginine biosynthesis bifunctional protein ArgJ, mitochondrial (439 aa).

Substrate contacts are provided by Thr175, Lys201, Thr212, Glu301, Asn434, and Ser439. Thr212 functions as the Nucleophile in the catalytic mechanism.

It belongs to the ArgJ family. As to quaternary structure, heterodimer of an alpha and a beta chain. Post-translationally, the alpha and beta chains are autoproteolytically processed from a single precursor protein within the mitochondrion.

It localises to the mitochondrion matrix. The catalysed reaction is N(2)-acetyl-L-ornithine + L-glutamate = N-acetyl-L-glutamate + L-ornithine. It catalyses the reaction L-glutamate + acetyl-CoA = N-acetyl-L-glutamate + CoA + H(+). It functions in the pathway amino-acid biosynthesis; L-arginine biosynthesis; L-ornithine and N-acetyl-L-glutamate from L-glutamate and N(2)-acetyl-L-ornithine (cyclic): step 1/1. The protein operates within amino-acid biosynthesis; L-arginine biosynthesis; N(2)-acetyl-L-ornithine from L-glutamate: step 1/4. Catalyzes two activities which are involved in the cyclic version of arginine biosynthesis: the synthesis of acetylglutamate from glutamate and acetyl-CoA, and of ornithine by transacetylation between acetylornithine and glutamate. This chain is Arginine biosynthesis bifunctional protein ArgJ, mitochondrial (ECM42), found in Candida albicans (strain SC5314 / ATCC MYA-2876) (Yeast).